The following is a 445-amino-acid chain: Tubulin beta chain (445 aa).

Positions 11, 69, 138, 142, 143, 144, 205, and 227 each coordinate GTP. Position 69 (glutamate 69) interacts with Mg(2+).

This sequence belongs to the tubulin family. Dimer of alpha and beta chains. A typical microtubule is a hollow water-filled tube with an outer diameter of 25 nm and an inner diameter of 15 nM. Alpha-beta heterodimers associate head-to-tail to form protofilaments running lengthwise along the microtubule wall with the beta-tubulin subunit facing the microtubule plus end conferring a structural polarity. Microtubules usually have 13 protofilaments but different protofilament numbers can be found in some organisms and specialized cells. The cofactor is Mg(2+).

The protein localises to the cytoplasm. The protein resides in the cytoskeleton. Tubulin is the major constituent of microtubules, a cylinder consisting of laterally associated linear protofilaments composed of alpha- and beta-tubulin heterodimers. Microtubules grow by the addition of GTP-tubulin dimers to the microtubule end, where a stabilizing cap forms. Below the cap, tubulin dimers are in GDP-bound state, owing to GTPase activity of alpha-tubulin. The polypeptide is Tubulin beta chain (TUB2) (Ajellomyces capsulatus (Darling's disease fungus)).